Consider the following 291-residue polypeptide: Protease HtpX homolog (291 aa).

2 helical membrane-spanning segments follow: residues 4-24 and 38-58; these read VVLF…SARV and MGML…ISLL. Residue histidine 144 coordinates Zn(2+). Glutamate 145 is a catalytic residue. Zn(2+) is bound at residue histidine 148. A run of 2 helical transmembrane segments spans residues 159–179 and 199–219; these read LIQG…AYAI and ISSI…VMYF. Glutamate 224 lines the Zn(2+) pocket.

The protein belongs to the peptidase M48B family. Requires Zn(2+) as cofactor.

It is found in the cell inner membrane. The protein is Protease HtpX homolog of Chlorobium phaeobacteroides (strain DSM 266 / SMG 266 / 2430).